A 231-amino-acid polypeptide reads, in one-letter code: Uracil-DNA glycosylase (231 aa).

The active-site Proton acceptor is the D71.

It belongs to the uracil-DNA glycosylase (UDG) superfamily. UNG family.

Its subcellular location is the cytoplasm. The catalysed reaction is Hydrolyzes single-stranded DNA or mismatched double-stranded DNA and polynucleotides, releasing free uracil.. Its function is as follows. Excises uracil residues from the DNA which can arise as a result of misincorporation of dUMP residues by DNA polymerase or due to deamination of cytosine. This Pseudomonas aeruginosa (strain UCBPP-PA14) protein is Uracil-DNA glycosylase.